A 160-amino-acid chain; its full sequence is Transcription elongation factor GreA (160 aa).

Residues 2–30 are a coiled coil; it reads SEKTYPMTLAEKEQLEQELEELKLVRRPE.

It belongs to the GreA/GreB family.

Necessary for efficient RNA polymerase transcription elongation past template-encoded arresting sites. The arresting sites in DNA have the property of trapping a certain fraction of elongating RNA polymerases that pass through, resulting in locked ternary complexes. Cleavage of the nascent transcript by cleavage factors such as GreA or GreB allows the resumption of elongation from the new 3'terminus. GreA releases sequences of 2 to 3 nucleotides. In Streptococcus mutans serotype c (strain ATCC 700610 / UA159), this protein is Transcription elongation factor GreA.